Reading from the N-terminus, the 279-residue chain is Protein CMSS1 (279 aa).

Over residues 1–10 (MADDLGDEWW) the composition is skewed to acidic residues. The tract at residues 1-89 (MADDLGDEWW…DVLAKSEPKP (89 aa)) is disordered. Over residues 12-22 (NQPTGAGSSPE) the composition is skewed to polar residues. Ser-19 and Ser-24 each carry phosphoserine. An Omega-N-methylarginine modification is found at Arg-167. At Thr-212 the chain carries Phosphothreonine.

It belongs to the CMS1 family.

This chain is Protein CMSS1 (CMSS1), found in Homo sapiens (Human).